Here is a 167-residue protein sequence, read N- to C-terminus: 2-C-methyl-D-erythritol 2,4-cyclodiphosphate synthase (167 aa).

Residues aspartate 8 and histidine 10 each contribute to the a divalent metal cation site. Residues aspartate 8–histidine 10 and histidine 34–serine 35 each bind 4-CDP-2-C-methyl-D-erythritol 2-phosphate. Histidine 42 lines the a divalent metal cation pocket. 4-CDP-2-C-methyl-D-erythritol 2-phosphate-binding positions include aspartate 56–glycine 58 and arginine 142.

Belongs to the IspF family. As to quaternary structure, homotrimer. A divalent metal cation serves as cofactor.

It carries out the reaction 4-CDP-2-C-methyl-D-erythritol 2-phosphate = 2-C-methyl-D-erythritol 2,4-cyclic diphosphate + CMP. Its pathway is isoprenoid biosynthesis; isopentenyl diphosphate biosynthesis via DXP pathway; isopentenyl diphosphate from 1-deoxy-D-xylulose 5-phosphate: step 4/6. Its function is as follows. Involved in the biosynthesis of isopentenyl diphosphate (IPP) and dimethylallyl diphosphate (DMAPP), two major building blocks of isoprenoid compounds. Catalyzes the conversion of 4-diphosphocytidyl-2-C-methyl-D-erythritol 2-phosphate (CDP-ME2P) to 2-C-methyl-D-erythritol 2,4-cyclodiphosphate (ME-CPP) with a corresponding release of cytidine 5-monophosphate (CMP). The polypeptide is 2-C-methyl-D-erythritol 2,4-cyclodiphosphate synthase (Buchnera aphidicola subsp. Schizaphis graminum (strain Sg)).